We begin with the raw amino-acid sequence, 236 residues long: MEASDGQGGEGDKPLEQVTNVSCLETSSSASPARDSLMRHAKGLDQDTFKTCKEYLRPLKKFLRKLHLPRDLPQKKKLKYMKQSLVVLGDHINTFLQHYCQAWEIKHWRKMLWRFISLFSELEAKQLRRLYKYTKSSQPAKFLVTFCASDAPERSLLADREDSLPKLCHAWGLHSNISGMKERLSNMQTPGQGSPLPGQPRSQDHVKKDSLRELSQKPKLKRKRIKEAPETPETEP.

The CHD1 helical C-terminal domain (CHCT) stretch occupies residues 44-145 (LDQDTFKTCK…SSQPAKFLVT (102 aa)). Positions 184-236 (LSNMQTPGQGSPLPGQPRSQDHVKKDSLRELSQKPKLKRKRIKEAPETPETEP) are disordered. A compositionally biased stretch (basic and acidic residues) spans 202–216 (SQDHVKKDSLRELSQ).

It localises to the cytoplasm. It is found in the nucleus. In terms of biological role, may play a role in regulation of apoptosis. This chain is CHD1 helical C-terminal domain containing protein 1, found in Homo sapiens (Human).